A 317-amino-acid polypeptide reads, in one-letter code: tRNA(Ile)-lysidine synthase (317 aa).

ATP is bound at residue 30–35 (SGGSDS).

This sequence belongs to the tRNA(Ile)-lysidine synthase family.

The protein localises to the cytoplasm. It catalyses the reaction cytidine(34) in tRNA(Ile2) + L-lysine + ATP = lysidine(34) in tRNA(Ile2) + AMP + diphosphate + H(+). In terms of biological role, ligates lysine onto the cytidine present at position 34 of the AUA codon-specific tRNA(Ile) that contains the anticodon CAU, in an ATP-dependent manner. Cytidine is converted to lysidine, thus changing the amino acid specificity of the tRNA from methionine to isoleucine. The protein is tRNA(Ile)-lysidine synthase of Chlamydia caviae (strain ATCC VR-813 / DSM 19441 / 03DC25 / GPIC) (Chlamydophila caviae).